Here is an 89-residue protein sequence, read N- to C-terminus: Cell division topological specificity factor (89 aa).

Belongs to the MinE family.

In terms of biological role, prevents the cell division inhibition by proteins MinC and MinD at internal division sites while permitting inhibition at polar sites. This ensures cell division at the proper site by restricting the formation of a division septum at the midpoint of the long axis of the cell. The chain is Cell division topological specificity factor from Heliobacterium modesticaldum (strain ATCC 51547 / Ice1).